The primary structure comprises 180 residues: Minor allergen Can f 2 (180 aa).

A signal peptide spans 1-18 (MQLLLLTVGLALICGLQA). N-linked (GlcNAc...) asparagine glycosylation is present at Asn45. Residues Cys82 and Cys175 are joined by a disulfide bond.

It belongs to the calycin superfamily. Lipocalin family. In terms of tissue distribution, tongue epithelial tissue and parotid gland.

It is found in the secreted. This Canis lupus familiaris (Dog) protein is Minor allergen Can f 2.